Here is a 141-residue protein sequence, read N- to C-terminus: ATP synthase epsilon chain (141 aa).

This sequence belongs to the ATPase epsilon chain family. As to quaternary structure, F-type ATPases have 2 components, CF(1) - the catalytic core - and CF(0) - the membrane proton channel. CF(1) has five subunits: alpha(3), beta(3), gamma(1), delta(1), epsilon(1). CF(0) has three main subunits: a, b and c.

It localises to the cell inner membrane. Functionally, produces ATP from ADP in the presence of a proton gradient across the membrane. This Bordetella avium (strain 197N) protein is ATP synthase epsilon chain.